The primary structure comprises 449 residues: Transport protein ComB (449 aa).

Over 1 to 20 (MKPEFLESAEFYNRRYHNFS) the chain is Cytoplasmic. Residues 21–41 (SSVIVPMALLLVFLLGFATVA) form a helical membrane-spanning segment. Residues 42 to 449 (EKEMSLSTRA…YYLDQFLNKE (408 aa)) lie on the Extracellular side of the membrane.

It belongs to the membrane fusion protein (MFP) (TC 8.A.1) family.

The protein resides in the cell membrane. In terms of biological role, required for induction of competence. The protein is Transport protein ComB (comB) of Streptococcus pneumoniae (strain ATCC BAA-255 / R6).